The sequence spans 376 residues: Peroxisomal membrane protein PEX27 (376 aa).

As to quaternary structure, homooligomer. Interacts with PEX25 and PEX34.

The protein localises to the peroxisome membrane. Required for regulation of peroxisome size and number. Also promotes peroxisome division and biogenesis. The polypeptide is Peroxisomal membrane protein PEX27 (PEX27) (Saccharomyces cerevisiae (strain ATCC 204508 / S288c) (Baker's yeast)).